Reading from the N-terminus, the 88-residue chain is MRLILSLPVLAVVLAMVLEGPAPAQAAPDMSSTLESIPGKLKEFGSTVKEKFRTAIDQIQKSDFPEKTRNWFSDVFQKVKEKFETTFS.

An N-terminal signal peptide occupies residues 1–26 (MRLILSLPVLAVVLAMVLEGPAPAQA).

Belongs to the apolipoprotein C1 family.

It is found in the secreted. Its function is as follows. Inhibitor of lipoprotein binding to the low density lipoprotein (LDL) receptor, LDL receptor-related protein, and very low density lipoprotein (VLDL) receptor. Associates with high density lipoproteins (HDL) and the triacylglycerol-rich lipoproteins in the plasma and makes up about 10% of the protein of the VLDL and 2% of that of HDL. Appears to interfere directly with fatty acid uptake and is also the major plasma inhibitor of cholesteryl ester transfer protein (CETP). Binds free fatty acids and reduces their intracellular esterification. Modulates the interaction of APOE with beta-migrating VLDL and inhibits binding of beta-VLDL to the LDL receptor-related protein. The chain is Apolipoprotein C-I (APOC1) from Cynopterus brachyotis (Lesser short-nosed fruit bat).